We begin with the raw amino-acid sequence, 270 residues long: Regulatory protein RecX (270 aa).

This sequence belongs to the RecX family.

It is found in the cytoplasm. Functionally, modulates RecA activity. The chain is Regulatory protein RecX from Bacillus thuringiensis subsp. konkukian (strain 97-27).